The primary structure comprises 349 residues: tRNA pseudouridine synthase D (349 aa).

D77 functions as the Nucleophile in the catalytic mechanism. One can recognise a TRUD domain in the interval 151-309 (GVPNYFGEQR…ETIDESTLKL (159 aa)).

Belongs to the pseudouridine synthase TruD family.

The catalysed reaction is uridine(13) in tRNA = pseudouridine(13) in tRNA. In terms of biological role, responsible for synthesis of pseudouridine from uracil-13 in transfer RNAs. The polypeptide is tRNA pseudouridine synthase D (Pseudoalteromonas translucida (strain TAC 125)).